A 264-amino-acid polypeptide reads, in one-letter code: 4-hydroxy-tetrahydrodipicolinate reductase (264 aa).

10–15 (GCLGRQ) is an NAD(+) binding site. Arginine 37 contributes to the NADP(+) binding site. NAD(+) is bound by residues 99–101 (GTT) and 121–124 (SANL). Residue histidine 153 is the Proton donor/acceptor of the active site. Residue histidine 154 participates in (S)-2,3,4,5-tetrahydrodipicolinate binding. The active-site Proton donor is lysine 157. 163-164 (GT) serves as a coordination point for (S)-2,3,4,5-tetrahydrodipicolinate.

The protein belongs to the DapB family.

It is found in the cytoplasm. It carries out the reaction (S)-2,3,4,5-tetrahydrodipicolinate + NAD(+) + H2O = (2S,4S)-4-hydroxy-2,3,4,5-tetrahydrodipicolinate + NADH + H(+). The enzyme catalyses (S)-2,3,4,5-tetrahydrodipicolinate + NADP(+) + H2O = (2S,4S)-4-hydroxy-2,3,4,5-tetrahydrodipicolinate + NADPH + H(+). Its pathway is amino-acid biosynthesis; L-lysine biosynthesis via DAP pathway; (S)-tetrahydrodipicolinate from L-aspartate: step 4/4. Functionally, catalyzes the conversion of 4-hydroxy-tetrahydrodipicolinate (HTPA) to tetrahydrodipicolinate. In Ehrlichia ruminantium (strain Gardel), this protein is 4-hydroxy-tetrahydrodipicolinate reductase.